The following is a 970-amino-acid chain: uncharacterized protein (970 aa).

Residues 12–32 (VIFFSVFFVIFFLFIESSVGF) traverse the membrane as a helical segment.

This sequence to E.coli YtfN.

It is found in the membrane. This is an uncharacterized protein from Buchnera aphidicola subsp. Acyrthosiphon pisum (strain APS) (Acyrthosiphon pisum symbiotic bacterium).